Reading from the N-terminus, the 356-residue chain is ATP-dependent 6-phosphofructokinase (356 aa).

Residues Gly-15, 78 to 79 (KG), and 115 to 118 (GEGT) each bind ATP. Residue Glu-116 participates in Mg(2+) binding. Substrate is bound by residues 138 to 140 (TID), Arg-175, 182 to 184 (MGR), Glu-235, Arg-272, and 278 to 281 (HLQR). Asp-140 (proton acceptor) is an active-site residue.

Belongs to the phosphofructokinase type A (PFKA) family. Mixed-substrate PFK group III subfamily. Homodimer or homotetramer. The cofactor is Mg(2+).

The protein localises to the cytoplasm. The enzyme catalyses beta-D-fructose 6-phosphate + ATP = beta-D-fructose 1,6-bisphosphate + ADP + H(+). Its pathway is carbohydrate degradation; glycolysis; D-glyceraldehyde 3-phosphate and glycerone phosphate from D-glucose: step 3/4. Catalyzes the phosphorylation of D-fructose 6-phosphate to fructose 1,6-bisphosphate by ATP, the first committing step of glycolysis. This Chloroflexus aggregans (strain MD-66 / DSM 9485) protein is ATP-dependent 6-phosphofructokinase.